We begin with the raw amino-acid sequence, 412 residues long: Proteasome-activating nucleotidase (412 aa).

Positions 15–73 (EDIYQYLLERITNLENRNLELREQFRQMESEKRYVETQKIRYERELRKLKSEIEQLRSP) form a coiled coil. ATP is bound by residues 197–202 (GTGKTL) and histidine 336. The tract at residues 410 to 412 (MFA) is docks into pockets in the proteasome alpha-ring to cause gate opening.

Belongs to the AAA ATPase family. In terms of assembly, homohexamer. The hexameric complex has a two-ring architecture resembling a top hat that caps the 20S proteasome core at one or both ends. Upon ATP-binding, the C-terminus of PAN interacts with the alpha-rings of the proteasome core by binding to the intersubunit pockets.

It localises to the cytoplasm. In terms of biological role, ATPase which is responsible for recognizing, binding, unfolding and translocation of substrate proteins into the archaeal 20S proteasome core particle. Is essential for opening the gate of the 20S proteasome via an interaction with its C-terminus, thereby allowing substrate entry and access to the site of proteolysis. Thus, the C-termini of the proteasomal ATPase function like a 'key in a lock' to induce gate opening and therefore regulate proteolysis. Unfolding activity requires energy from ATP hydrolysis, whereas ATP binding alone promotes ATPase-20S proteasome association which triggers gate opening, and supports translocation of unfolded substrates. The chain is Proteasome-activating nucleotidase from Methanoculleus marisnigri (strain ATCC 35101 / DSM 1498 / JR1).